A 345-amino-acid polypeptide reads, in one-letter code: Anthranilate phosphoribosyltransferase (345 aa).

5-phospho-alpha-D-ribose 1-diphosphate is bound by residues Gly84, 87 to 88, Thr92, 94 to 97, 112 to 120, and Ser124; these read GD, NIST, and KHGGRGVSS. Residue Gly84 participates in anthranilate binding. Ser96 contacts Mg(2+). Residue Arg170 participates in anthranilate binding. The Mg(2+) site is built by Asp229 and Glu230.

The protein belongs to the anthranilate phosphoribosyltransferase family. In terms of assembly, homodimer. Requires Mg(2+) as cofactor.

It catalyses the reaction N-(5-phospho-beta-D-ribosyl)anthranilate + diphosphate = 5-phospho-alpha-D-ribose 1-diphosphate + anthranilate. It functions in the pathway amino-acid biosynthesis; L-tryptophan biosynthesis; L-tryptophan from chorismate: step 2/5. Functionally, catalyzes the transfer of the phosphoribosyl group of 5-phosphorylribose-1-pyrophosphate (PRPP) to anthranilate to yield N-(5'-phosphoribosyl)-anthranilate (PRA). This Paracidovorax citrulli (strain AAC00-1) (Acidovorax citrulli) protein is Anthranilate phosphoribosyltransferase.